We begin with the raw amino-acid sequence, 433 residues long: 23S rRNA (uracil(1939)-C(5))-methyltransferase RlmD (433 aa).

The TRAM domain occupies 10–68 (RTTTRQIITVSVNDLDSFGQGVARHNGKTLFIPGLLPQENAEVTVTEDKKQYARAKVVR). [4Fe-4S] cluster contacts are provided by C81, C87, C90, and C162. The S-adenosyl-L-methionine site is built by Q265, F294, N299, E315, N342, and D363. C389 functions as the Nucleophile in the catalytic mechanism.

The protein belongs to the class I-like SAM-binding methyltransferase superfamily. RNA M5U methyltransferase family. RlmD subfamily.

The enzyme catalyses uridine(1939) in 23S rRNA + S-adenosyl-L-methionine = 5-methyluridine(1939) in 23S rRNA + S-adenosyl-L-homocysteine + H(+). Functionally, catalyzes the formation of 5-methyl-uridine at position 1939 (m5U1939) in 23S rRNA. In Escherichia coli O6:K15:H31 (strain 536 / UPEC), this protein is 23S rRNA (uracil(1939)-C(5))-methyltransferase RlmD.